The primary structure comprises 119 residues: Protein phosphatase EYA1 (119 aa).

It belongs to the HAD-like hydrolase superfamily. EYA family. Mg(2+) is required as a cofactor.

The protein resides in the cytoplasm. It localises to the nucleus. The enzyme catalyses O-phospho-L-tyrosyl-[protein] + H2O = L-tyrosyl-[protein] + phosphate. The catalysed reaction is O-phospho-L-seryl-[protein] + H2O = L-seryl-[protein] + phosphate. It carries out the reaction O-phospho-L-threonyl-[protein] + H2O = L-threonyl-[protein] + phosphate. In terms of biological role, functions both as protein phosphatase and as transcriptional coactivator for SIX1, and probably also for other transcription factors of this family. Tyrosine phosphatase that dephosphorylates 'Tyr-142' of histone H2AX (H2AXY142ph) and promotes efficient DNA repair via the recruitment of DNA repair complexes containing MDC1. 'Tyr-142' phosphorylation of histone H2AX plays a central role in DNA repair and acts as a mark that distinguishes between apoptotic and repair responses to genotoxic stress. Its function as histone phosphatase may contribute to its function in transcription regulation during organogenesis. Also has phosphatase activity with proteins phosphorylated on Ser and Thr residues (in vitro). Required for normal embryonic development of the skeleton, kidneys and ears. This Gallus gallus (Chicken) protein is Protein phosphatase EYA1 (EYA1).